Here is a 319-residue protein sequence, read N- to C-terminus: Transcription initiation factor IIB 6 (319 aa).

The segment covering 1–16 (MTDARMRSREQERTDE) has biased composition (basic and acidic residues). Residues 1–33 (MTDARMRSREQERTDETESESTDGCPECGGLVV) are disordered. The TFIIB-type zinc-finger motif lies at 21–51 (STDGCPECGGLVVNDEEHGESVCADCGLVVE). Zn(2+) contacts are provided by Cys-25, Cys-28, Cys-43, and Cys-46. Over residues 59 to 74 (PEWRAFDSKEKDEKSR) the composition is skewed to basic and acidic residues. Residues 59–89 (PEWRAFDSKEKDEKSRVGAPTTNTMHDKGLS) form a disordered region. 2 tandem repeats follow at residues 137-220 (GEID…VREL) and 231-312 (SYVP…ELLE).

Belongs to the TFIIB family.

In terms of biological role, stabilizes TBP binding to an archaeal box-A promoter. Also responsible for recruiting RNA polymerase II to the pre-initiation complex (DNA-TBP-TFIIB). In Halobacterium salinarum (strain ATCC 700922 / JCM 11081 / NRC-1) (Halobacterium halobium), this protein is Transcription initiation factor IIB 6.